Consider the following 586-residue polypeptide: Germ cell nuclear acidic protein (586 aa).

Disordered regions lie at residues 17–119, 176–202, 217–266, and 279–318; these read GWDR…LSSE, KAKTVKTPKSVQKTKKPAPSLCNSPVF, TWRT…SSEE, and LGGRTSASPMPSAEPKPQRPCLSTPSATGRKTGSQVPVKD. The segment covering 65 to 76 has biased composition (basic and acidic residues); it reads SGKENRSQEEHI. Over residues 94 to 107 the composition is skewed to polar residues; sequence TPKSTFKQSASSAQ. Residues 176–191 show a composition bias toward basic residues; the sequence is KAKTVKTPKSVQKTKK. Residues 225–244 show a composition bias toward basic and acidic residues; the sequence is PPSDEHQATSKDREETEKPR. The span at 299–313 shows a compositional bias: polar residues; that stretch reads CLSTPSATGRKTGSQ. One can recognise a SprT-like domain in the interval 383–482; the sequence is KLYQLYNTSV…LYARKAMLAH (100 aa).

It belongs to the serine-aspartate repeat-containing protein (SDr) family.

Its subcellular location is the nucleus. It localises to the PML body. The protein localises to the chromosome. May play a role in DNA-protein cross-links (DPCs) clearance, ensuring the genomic stability by protecting germ cells and early embryos from various sources of damage. The chain is Germ cell nuclear acidic protein (gcna) from Danio rerio (Zebrafish).